The primary structure comprises 201 residues: uncharacterized protein (201 aa).

A signal peptide spans 1-19 (MKLIVSVFLIGCQFLNILG).

This is an uncharacterized protein from Acheta domesticus (House cricket).